A 115-amino-acid polypeptide reads, in one-letter code: U3-lycotoxin-Ls1n (115 aa).

An N-terminal signal peptide occupies residues 1–20 (MKFVLLFGVLLVTLFSYSSA). The propeptide occupies 21–44 (EMLDDFDQADEDELLSLIEKEEAR). 4 cysteine pairs are disulfide-bonded: Cys-48–Cys-63, Cys-55–Cys-72, Cys-62–Cys-87, and Cys-74–Cys-85.

The protein belongs to the neurotoxin 19 (CSTX) family. 01 subfamily. Expressed by the venom gland.

The protein localises to the secreted. In Lycosa singoriensis (Wolf spider), this protein is U3-lycotoxin-Ls1n.